A 192-amino-acid polypeptide reads, in one-letter code: dTTP/UTP pyrophosphatase (192 aa).

The Proton acceptor role is filled by D70.

The protein belongs to the Maf family. YhdE subfamily. A divalent metal cation is required as a cofactor.

It is found in the cytoplasm. It catalyses the reaction dTTP + H2O = dTMP + diphosphate + H(+). The catalysed reaction is UTP + H2O = UMP + diphosphate + H(+). Its function is as follows. Nucleoside triphosphate pyrophosphatase that hydrolyzes dTTP and UTP. May have a dual role in cell division arrest and in preventing the incorporation of modified nucleotides into cellular nucleic acids. The protein is dTTP/UTP pyrophosphatase of Alkaliphilus metalliredigens (strain QYMF).